The chain runs to 170 residues: NADH-quinone oxidoreductase subunit B (170 aa).

Cysteine 37, cysteine 38, cysteine 102, and cysteine 131 together coordinate [4Fe-4S] cluster.

The protein belongs to the complex I 20 kDa subunit family. As to quaternary structure, NDH-1 is composed of 14 different subunits. Subunits NuoB, C, D, E, F, and G constitute the peripheral sector of the complex. [4Fe-4S] cluster serves as cofactor.

It is found in the cell inner membrane. It carries out the reaction a quinone + NADH + 5 H(+)(in) = a quinol + NAD(+) + 4 H(+)(out). In terms of biological role, NDH-1 shuttles electrons from NADH, via FMN and iron-sulfur (Fe-S) centers, to quinones in the respiratory chain. The immediate electron acceptor for the enzyme in this species is believed to be ubiquinone. Couples the redox reaction to proton translocation (for every two electrons transferred, four hydrogen ions are translocated across the cytoplasmic membrane), and thus conserves the redox energy in a proton gradient. This Geotalea uraniireducens (strain Rf4) (Geobacter uraniireducens) protein is NADH-quinone oxidoreductase subunit B.